The sequence spans 1148 residues: Minor outer capsid protein P2 (1148 aa).

In terms of domain architecture, PPPDE spans Gln930–Leu1148. Active-site residues include His954 and Cys1111.

The protein belongs to the phytoreovirus minor outer capsid protein P2 family.

The protein localises to the virion. It localises to the host cytoplasm. In terms of biological role, minor capsid protein present in the outer capsid, which is required for adsorption of the virus onto host insect cells. The polypeptide is Minor outer capsid protein P2 (Nephotettix cincticeps (Green rice leafhopper)).